Reading from the N-terminus, the 354-residue chain is Methionine import ATP-binding protein MetN (354 aa).

The 243-residue stretch at 8-250 folds into the ABC transporter domain; it reads LDHIDITFHQ…PKEALTQEFI (243 aa). 42-49 contacts ATP; it reads GYSGAGKS.

Belongs to the ABC transporter superfamily. Methionine importer (TC 3.A.1.24) family. In terms of assembly, the complex is composed of two ATP-binding proteins (MetN), two transmembrane proteins (MetI) and a solute-binding protein (MetQ).

It is found in the cell membrane. It carries out the reaction L-methionine(out) + ATP + H2O = L-methionine(in) + ADP + phosphate + H(+). The catalysed reaction is D-methionine(out) + ATP + H2O = D-methionine(in) + ADP + phosphate + H(+). Its function is as follows. Part of the ABC transporter complex MetNIQ involved in methionine import. Responsible for energy coupling to the transport system. The sequence is that of Methionine import ATP-binding protein MetN from Streptococcus pyogenes serotype M4 (strain MGAS10750).